A 67-amino-acid chain; its full sequence is Conotoxin Im3.1 (67 aa).

Positions 1 to 20 (MMSTLVVLLTICLLMLPLTA) are cleaved as a signal peptide. The propeptide occupies 21-52 (RQLDADQLADQLAERMEDISADQNRWFDPVKR). Intrachain disulfides connect C53–C63, C54–C61, and C59–C64.

The protein belongs to the conotoxin M superfamily. Expressed by the venom duct.

The protein localises to the secreted. In terms of biological role, probable neurotoxin. This is Conotoxin Im3.1 from Conus imperialis (Imperial cone).